The primary structure comprises 250 residues: 3-deoxy-manno-octulosonate cytidylyltransferase (250 aa).

This sequence belongs to the KdsB family.

It is found in the cytoplasm. It carries out the reaction 3-deoxy-alpha-D-manno-oct-2-ulosonate + CTP = CMP-3-deoxy-beta-D-manno-octulosonate + diphosphate. The protein operates within nucleotide-sugar biosynthesis; CMP-3-deoxy-D-manno-octulosonate biosynthesis; CMP-3-deoxy-D-manno-octulosonate from 3-deoxy-D-manno-octulosonate and CTP: step 1/1. Its pathway is bacterial outer membrane biogenesis; lipopolysaccharide biosynthesis. Functionally, activates KDO (a required 8-carbon sugar) for incorporation into bacterial lipopolysaccharide in Gram-negative bacteria. This chain is 3-deoxy-manno-octulosonate cytidylyltransferase, found in Thioalkalivibrio sulfidiphilus (strain HL-EbGR7).